The sequence spans 237 residues: Ribonuclease PH (237 aa).

Residues Arg86 and 124–126 (GTR) contribute to the phosphate site.

The protein belongs to the RNase PH family. As to quaternary structure, homohexameric ring arranged as a trimer of dimers.

It carries out the reaction tRNA(n+1) + phosphate = tRNA(n) + a ribonucleoside 5'-diphosphate. Its function is as follows. Phosphorolytic 3'-5' exoribonuclease that plays an important role in tRNA 3'-end maturation. Removes nucleotide residues following the 3'-CCA terminus of tRNAs; can also add nucleotides to the ends of RNA molecules by using nucleoside diphosphates as substrates, but this may not be physiologically important. Probably plays a role in initiation of 16S rRNA degradation (leading to ribosome degradation) during starvation. The polypeptide is Ribonuclease PH (Idiomarina loihiensis (strain ATCC BAA-735 / DSM 15497 / L2-TR)).